A 497-amino-acid polypeptide reads, in one-letter code: Cytochrome P450 71A20 (497 aa).

Residues methionine 3–lysine 23 form a helical membrane-spanning segment. Cysteine 440 is a binding site for heme.

Belongs to the cytochrome P450 family. Heme serves as cofactor.

It is found in the membrane. The sequence is that of Cytochrome P450 71A20 (CYP71A20) from Arabidopsis thaliana (Mouse-ear cress).